Consider the following 378-residue polypeptide: UDP-N-acetylglucosamine--N-acetylmuramyl-(pentapeptide) pyrophosphoryl-undecaprenol N-acetylglucosamine transferase (378 aa).

Residues 14–16 (TGG), N125, R165, S193, and Q293 contribute to the UDP-N-acetyl-alpha-D-glucosamine site.

This sequence belongs to the glycosyltransferase 28 family. MurG subfamily.

It localises to the cell inner membrane. It catalyses the reaction di-trans,octa-cis-undecaprenyl diphospho-N-acetyl-alpha-D-muramoyl-L-alanyl-D-glutamyl-meso-2,6-diaminopimeloyl-D-alanyl-D-alanine + UDP-N-acetyl-alpha-D-glucosamine = di-trans,octa-cis-undecaprenyl diphospho-[N-acetyl-alpha-D-glucosaminyl-(1-&gt;4)]-N-acetyl-alpha-D-muramoyl-L-alanyl-D-glutamyl-meso-2,6-diaminopimeloyl-D-alanyl-D-alanine + UDP + H(+). The protein operates within cell wall biogenesis; peptidoglycan biosynthesis. Its function is as follows. Cell wall formation. Catalyzes the transfer of a GlcNAc subunit on undecaprenyl-pyrophosphoryl-MurNAc-pentapeptide (lipid intermediate I) to form undecaprenyl-pyrophosphoryl-MurNAc-(pentapeptide)GlcNAc (lipid intermediate II). The chain is UDP-N-acetylglucosamine--N-acetylmuramyl-(pentapeptide) pyrophosphoryl-undecaprenol N-acetylglucosamine transferase from Bartonella bacilliformis (strain ATCC 35685 / KC583 / Herrer 020/F12,63).